The sequence spans 185 residues: Translocon-associated protein subunit gamma (185 aa).

Met1 carries the post-translational modification N-acetylmethionine. Residues 1-27 (MAPKGSSKQQSEEDLLLQDFSRNLSAK) are Lumenal-facing. 2 positions are modified to phosphoserine: Ser7 and Ser11. The helical transmembrane segment at 28 to 48 (SSALFFGNAFIVSAIPIWLYW) threads the bilayer. Over 49-54 (RIWHMD) the chain is Cytoplasmic. The helical transmembrane segment at 55-76 (LIQSAVLYSVMTLVSTYLVAFA) threads the bilayer. The Lumenal segment spans residues 77–135 (YKNVKFVLKHKVAQKREDAVSKEVTRKLSEADNRKMSRKEKDERILWKKNEVADYEATT). Position 105 is a phosphoserine (Ser105). A helical transmembrane segment spans residues 136–157 (FSIFYNNTLFLVVVIVASFFIL). The Cytoplasmic segment spans residues 158-163 (KNFNPT). The helical transmembrane segment at 164 to 184 (VNYILSISASSGLIALLSTGS) threads the bilayer.

This sequence belongs to the TRAP-gamma family. Heterotetramer of TRAP-alpha, TRAP-beta, TRAP-delta and TRAP-gamma.

It localises to the endoplasmic reticulum membrane. In terms of biological role, TRAP proteins are part of a complex whose function is to bind calcium to the ER membrane and thereby regulate the retention of ER resident proteins. This is Translocon-associated protein subunit gamma (SSR3) from Homo sapiens (Human).